The chain runs to 275 residues: Large ribosomal subunit protein uL2 (275 aa).

Residues 219 to 263 (EVRGAAMNPRDHPHGGGEGRAPRGMPTPKTKWGKPARGVKTRHNP) form a disordered region. Positions 227 to 239 (PRDHPHGGGEGRA) are enriched in basic and acidic residues. The segment covering 249–262 (KWGKPARGVKTRHN) has biased composition (basic residues).

Belongs to the universal ribosomal protein uL2 family. As to quaternary structure, part of the 50S ribosomal subunit. Forms a bridge to the 30S subunit in the 70S ribosome.

Functionally, one of the primary rRNA binding proteins. Required for association of the 30S and 50S subunits to form the 70S ribosome, for tRNA binding and peptide bond formation. It has been suggested to have peptidyltransferase activity; this is somewhat controversial. Makes several contacts with the 16S rRNA in the 70S ribosome. The polypeptide is Large ribosomal subunit protein uL2 (Roseiflexus castenholzii (strain DSM 13941 / HLO8)).